A 91-amino-acid polypeptide reads, in one-letter code: MRRCIHIKERKIHMTNIVDRNVTFILTVVHKYVRYVPHTVANDAHNLVHLAHLIHFIIYFFIIRDVRKKKKKKKKNRTIYFFSNVYARHIK.

This is an uncharacterized protein from Vaccinia virus (strain Copenhagen) (VACV).